A 207-amino-acid chain; its full sequence is Ribosomal RNA small subunit methyltransferase G (207 aa).

S-adenosyl-L-methionine-binding positions include G76, Q81, 127-128 (VE), and R141.

The protein belongs to the methyltransferase superfamily. RNA methyltransferase RsmG family.

It is found in the cytoplasm. The enzyme catalyses guanosine(527) in 16S rRNA + S-adenosyl-L-methionine = N(7)-methylguanosine(527) in 16S rRNA + S-adenosyl-L-homocysteine. Specifically methylates the N7 position of guanine in position 527 of 16S rRNA. The sequence is that of Ribosomal RNA small subunit methyltransferase G from Neisseria meningitidis serogroup C / serotype 2a (strain ATCC 700532 / DSM 15464 / FAM18).